Here is a 223-residue protein sequence, read N- to C-terminus: Killer cell lectin-like receptor subfamily B member 1B allele C (223 aa).

Topologically, residues 1-45 (MDTAVVYADLHLARTGEPKRESPPSLSPDTCQCPRWHRLALKLGC) are cytoplasmic. An ITIM motif motif is present at residues 5-10 (VVYADL). Positions 31–34 (CQCP) match the LCK-binding motif motif. Residues 46–66 (ACFILLVLSVIGLGVLVLTLL) form a helical; Signal-anchor for type II membrane protein membrane-spanning segment. Topologically, residues 67–223 (QKPLLQNSPA…LKRESTCNDS (157 aa)) are extracellular. A C-type lectin domain is found at 101–211 (HRDKCFHVSQ…CDSDNIWICQ (111 aa)). 2 cysteine pairs are disulfide-bonded: Cys122–Cys210 and Cys189–Cys202.

As to quaternary structure, homodimer; disulfide-linked. Interacts with tyrosine kinase LCK. Binds PTPN6/SHP-1 in a phosphorylation-dependent manner. As to expression, expressed in a subset of natural killer cells.

It localises to the membrane. Its function is as follows. Receptor for CLEC2D/OCIL. Ligand-binding contributes to inhibition of cytotoxic natural killer (NK) cells. May mediate MHC class I-independent 'missing-self' recognition of allografts, tumor cells and virus-infected cells. This chain is Killer cell lectin-like receptor subfamily B member 1B allele C, found in Rattus norvegicus (Rat).